The chain runs to 179 residues: ATP synthase subunit b (179 aa).

Residues 23–43 (IFWLIITFGILYVVLSKLILP) traverse the membrane as a helical segment.

Belongs to the ATPase B chain family. In terms of assembly, F-type ATPases have 2 components, F(1) - the catalytic core - and F(0) - the membrane proton channel. F(1) has five subunits: alpha(3), beta(3), gamma(1), delta(1), epsilon(1). F(0) has three main subunits: a(1), b(2) and c(10-14). The alpha and beta chains form an alternating ring which encloses part of the gamma chain. F(1) is attached to F(0) by a central stalk formed by the gamma and epsilon chains, while a peripheral stalk is formed by the delta and b chains.

The protein resides in the cell inner membrane. F(1)F(0) ATP synthase produces ATP from ADP in the presence of a proton or sodium gradient. F-type ATPases consist of two structural domains, F(1) containing the extramembraneous catalytic core and F(0) containing the membrane proton channel, linked together by a central stalk and a peripheral stalk. During catalysis, ATP synthesis in the catalytic domain of F(1) is coupled via a rotary mechanism of the central stalk subunits to proton translocation. In terms of biological role, component of the F(0) channel, it forms part of the peripheral stalk, linking F(1) to F(0). This is ATP synthase subunit b from Pelagibacter ubique (strain HTCC1062).